A 451-amino-acid chain; its full sequence is Trigger factor (451 aa).

One can recognise a PPIase FKBP-type domain in the interval 170–256 (DHIATIDYCE…LTALKYKDLP (87 aa)).

This sequence belongs to the FKBP-type PPIase family. Tig subfamily.

It localises to the cytoplasm. It carries out the reaction [protein]-peptidylproline (omega=180) = [protein]-peptidylproline (omega=0). Involved in protein export. Acts as a chaperone by maintaining the newly synthesized protein in an open conformation. Functions as a peptidyl-prolyl cis-trans isomerase. The polypeptide is Trigger factor (Treponema denticola (strain ATCC 35405 / DSM 14222 / CIP 103919 / JCM 8153 / KCTC 15104)).